The sequence spans 1555 residues: Glycogen debranching enzyme (1555 aa).

The residue at position 87 (Ser87) is a Phosphoserine. Catalysis depends on residues Asp549, His552, and Asp650.

The protein belongs to the glycogen debranching enzyme family. As to quaternary structure, monomer. Interacts with NHLRC1/malin. The N-terminus is blocked. In terms of processing, ubiquitinated.

It localises to the cytoplasm. It catalyses the reaction Transfers a segment of a (1-&gt;4)-alpha-D-glucan to a new position in an acceptor, which may be glucose or a (1-&gt;4)-alpha-D-glucan.. The catalysed reaction is Hydrolysis of (1-&gt;6)-alpha-D-glucosidic branch linkages in glycogen phosphorylase limit dextrin.. Functionally, multifunctional enzyme acting as 1,4-alpha-D-glucan:1,4-alpha-D-glucan 4-alpha-D-glycosyltransferase and amylo-1,6-glucosidase in glycogen degradation. This chain is Glycogen debranching enzyme (AGL), found in Oryctolagus cuniculus (Rabbit).